Consider the following 71-residue polypeptide: Translational regulator CsrA (71 aa).

This sequence belongs to the CsrA/RsmA family. Homodimer; the beta-strands of each monomer intercalate to form a hydrophobic core, while the alpha-helices form wings that extend away from the core.

It localises to the cytoplasm. Its function is as follows. A key translational regulator that binds mRNA to regulate translation initiation and/or mRNA stability. Mediates global changes in gene expression, shifting from rapid growth to stress survival by linking envelope stress, the stringent response and the catabolite repression systems. Usually binds in the 5'-UTR; binding at or near the Shine-Dalgarno sequence prevents ribosome-binding, repressing translation, binding elsewhere in the 5'-UTR can activate translation and/or stabilize the mRNA. Its function is antagonized by small RNA(s). This is Translational regulator CsrA from Pseudoalteromonas atlantica (strain T6c / ATCC BAA-1087).